The chain runs to 480 residues: Coronin-2B (480 aa).

WD repeat units follow at residues 85-125 (GHQG…LKRN), 135-177 (GHSR…KMID), 179-217 (HTDV…VLQE), 220-263 (CKNH…MPMI), and 265-308 (EEID…PYLS). The stretch at 436 to 479 (NELLRMFFRQQDEIRRLKEELAQKDIRLRQLQLELKNLRNNPKN) forms a coiled coil.

The protein belongs to the WD repeat coronin family. As to quaternary structure, binds to F-actin and to vinculin.

The protein resides in the cytoplasm. It localises to the cytoskeleton. May play a role in the reorganization of neuronal actin structure. The polypeptide is Coronin-2B (Coro2b) (Mus musculus (Mouse)).